A 68-amino-acid polypeptide reads, in one-letter code: Protein SlyX homolog (68 aa).

Belongs to the SlyX family.

This is Protein SlyX homolog from Pseudomonas syringae pv. syringae (strain B728a).